We begin with the raw amino-acid sequence, 287 residues long: Diaminopimelate epimerase (287 aa).

Residues asparagine 11, glutamine 44, and asparagine 64 each coordinate substrate. Cysteine 73 (proton donor) is an active-site residue. Substrate-binding positions include 74-75 (GN), asparagine 157, asparagine 190, and 208-209 (ER). Cysteine 217 (proton acceptor) is an active-site residue. Residue 218-219 (GT) coordinates substrate.

It belongs to the diaminopimelate epimerase family. In terms of assembly, homodimer.

It is found in the cytoplasm. The enzyme catalyses (2S,6S)-2,6-diaminopimelate = meso-2,6-diaminopimelate. It participates in amino-acid biosynthesis; L-lysine biosynthesis via DAP pathway; DL-2,6-diaminopimelate from LL-2,6-diaminopimelate: step 1/1. Functionally, catalyzes the stereoinversion of LL-2,6-diaminopimelate (L,L-DAP) to meso-diaminopimelate (meso-DAP), a precursor of L-lysine and an essential component of the bacterial peptidoglycan. The polypeptide is Diaminopimelate epimerase (Halorhodospira halophila (strain DSM 244 / SL1) (Ectothiorhodospira halophila (strain DSM 244 / SL1))).